The following is a 110-amino-acid chain: UPF0132 membrane protein MJ1443 (110 aa).

3 helical membrane-spanning segments follow: residues Ile-15–Glu-35, Ile-49–Trp-69, and Met-70–Ala-90.

It belongs to the UPF0132 family.

It localises to the cell membrane. The polypeptide is UPF0132 membrane protein MJ1443 (Methanocaldococcus jannaschii (strain ATCC 43067 / DSM 2661 / JAL-1 / JCM 10045 / NBRC 100440) (Methanococcus jannaschii)).